The following is a 435-amino-acid chain: GTPase Der (435 aa).

EngA-type G domains follow at residues 4-167 (PVVA…PAEK) and 175-350 (ISFS…DNQN). Residues 10–17 (GQPNVGKS), 57–61 (DTGGI), 119–122 (NKAD), 181–188 (GRPNVGKS), 228–232 (DTAGI), and 293–296 (NKWD) contribute to the GTP site. In terms of domain architecture, KH-like spans 351–435 (QRIQSSVLND…PIKILPRKRK (85 aa)).

It belongs to the TRAFAC class TrmE-Era-EngA-EngB-Septin-like GTPase superfamily. EngA (Der) GTPase family. Associates with the 50S ribosomal subunit.

In terms of biological role, GTPase that plays an essential role in the late steps of ribosome biogenesis. The polypeptide is GTPase Der (Lactobacillus acidophilus (strain ATCC 700396 / NCK56 / N2 / NCFM)).